Reading from the N-terminus, the 632-residue chain is Extracellular metalloproteinase 2 (632 aa).

A signal peptide spans 1 to 19; that stretch reads MHGLLLAGLAVALPLGVAG. The propeptide occupies 20-244; that stretch reads HPARPQTALS…VHNVVDYVAS (225 aa). N-linked (GlcNAc...) asparagine glycosylation is present at Asn270. Over residues 294 to 310 the composition is skewed to polar residues; sequence NNVAAQDNPSGGSQWEN. A disordered region spans residues 294–313; the sequence is NNVAAQDNPSGGSQWENNYR. Zn(2+) is bound at residue His429. Residue Glu430 is part of the active site. A Zn(2+)-binding site is contributed by His433.

Belongs to the peptidase M36 family. Zn(2+) is required as a cofactor.

The protein resides in the secreted. Its function is as follows. Secreted metalloproteinase probably acting as a virulence factor. In Arthroderma otae (Microsporum canis), this protein is Extracellular metalloproteinase 2 (MEP2).